A 491-amino-acid polypeptide reads, in one-letter code: Probable glycine dehydrogenase (decarboxylating) subunit 2 (491 aa).

Lys273 is modified (N6-(pyridoxal phosphate)lysine).

Belongs to the GcvP family. C-terminal subunit subfamily. The glycine cleavage system is composed of four proteins: P, T, L and H. In this organism, the P 'protein' is a heterodimer of two subunits. Pyridoxal 5'-phosphate serves as cofactor.

The catalysed reaction is N(6)-[(R)-lipoyl]-L-lysyl-[glycine-cleavage complex H protein] + glycine + H(+) = N(6)-[(R)-S(8)-aminomethyldihydrolipoyl]-L-lysyl-[glycine-cleavage complex H protein] + CO2. Its function is as follows. The glycine cleavage system catalyzes the degradation of glycine. The P protein binds the alpha-amino group of glycine through its pyridoxal phosphate cofactor; CO(2) is released and the remaining methylamine moiety is then transferred to the lipoamide cofactor of the H protein. In Bacillus cereus (strain G9842), this protein is Probable glycine dehydrogenase (decarboxylating) subunit 2.